A 232-amino-acid polypeptide reads, in one-letter code: Large ribosomal subunit protein uL1 (232 aa).

The protein belongs to the universal ribosomal protein uL1 family. In terms of assembly, part of the 50S ribosomal subunit.

In terms of biological role, binds directly to 23S rRNA. The L1 stalk is quite mobile in the ribosome, and is involved in E site tRNA release. Functionally, protein L1 is also a translational repressor protein, it controls the translation of the L11 operon by binding to its mRNA. This chain is Large ribosomal subunit protein uL1, found in Christiangramia forsetii (strain DSM 17595 / CGMCC 1.15422 / KT0803) (Gramella forsetii).